The sequence spans 159 residues: Late embryogenesis abundant protein 50 (159 aa).

2 SMP domains span residues 30–87 (TTLT…RNQK) and 96–151 (NLGD…YKLN).

This sequence belongs to the LEA type SMP family.

The protein localises to the cytoplasm. It is found in the nucleus. Functionally, LEA proteins are late embryonic proteins abundant in higher plant seed embryos. The function of those proteins is not known. This Arabidopsis thaliana (Mouse-ear cress) protein is Late embryogenesis abundant protein 50.